A 396-amino-acid chain; its full sequence is Corticosteroid-binding globulin (396 aa).

The signal sequence occupies residues 1-22; it reads MSLALYTCLLWLCTSGLWTAQA. Residues N88 and N216 are each glycosylated (N-linked (GlcNAc...) asparagine). Residue Q246 participates in cortisol binding. An N-linked (GlcNAc...) asparagine glycan is attached at N252. D278 contacts cortisol. N-linked (GlcNAc...) asparagine glycans are attached at residues N319 and N352. W384 is a cortisol binding site.

The protein belongs to the serpin family. As to expression, expressed by the liver; secreted in plasma.

It localises to the secreted. In terms of biological role, major transport protein for glucocorticoids and progestins in the blood of almost all vertebrate species. This is Corticosteroid-binding globulin (Serpina6) from Rattus norvegicus (Rat).